The primary structure comprises 289 residues: LysM and putative peptidoglycan-binding domain-containing protein 4 (289 aa).

Positions 1-23 are disordered; that stretch reads MRLREGPTHSFQPPSSVHSSLGS. The Extracellular portion of the chain corresponds to 1–208; the sequence is MRLREGPTHS…PASGADWGIR (208 aa). The span at 9–23 shows a compositional bias: polar residues; sequence HSFQPPSSVHSSLGS. Residues Asn30 and Asn59 are each glycosylated (N-linked (GlcNAc...) asparagine). Positions 71-115 constitute a LysM domain; that stretch reads LERAITEDDNLNKLALQYGCKVSDIKRVNNLITDQDIYALKTIKI. Residues Asn134 and Asn178 are each glycosylated (N-linked (GlcNAc...) asparagine). A helical transmembrane segment spans residues 209–229; sequence WWNAVFIMLLVGIVLPVFYIV. At 230–289 the chain is on the cytoplasmic side; the sequence is YFKTQGDSEGTFSIEGRTNVSTSLSPHTNTGHSMEQMTQRTSGFSPGLLQDTHKLLNPGG. The interval 252–272 is disordered; the sequence is SLSPHTNTGHSMEQMTQRTSG.

It localises to the membrane. This is LysM and putative peptidoglycan-binding domain-containing protein 4 (lysmd4) from Xenopus laevis (African clawed frog).